Consider the following 501-residue polypeptide: O-phosphoseryl-tRNA(Sec) selenium transferase (501 aa).

Residues 1–44 (MNRESFAAGERLVSPAYVRQGCEARRSHEHLIRLLLEKGKCPEN) are tetramerization. S14 bears the Phosphoserine mark. Residue R75 coordinates pyridoxal 5'-phosphate. Residues 96 to 106 (GRSGDISAVQP) are phosphate loop (P-loop). Substrate-binding residues include R97, S98, and Q105. R271 contacts tRNA. K284 is subject to N6-(pyridoxal phosphate)lysine. Substrate is bound at residue R313. TRNA contacts are provided by R398 and K463. The interval 474-493 (DKTEDVDIEEMALKLDNVLL) is SLA/LP epitope.

The protein belongs to the SepSecS family. In terms of assembly, homotetramer formed by a catalytic dimer and a non-catalytic dimer serving as a binding platform that orients tRNASec for catalysis. Each tetramer binds the CCA ends of two tRNAs which point to the active sites of the catalytic dimer. The cofactor is pyridoxal 5'-phosphate. As to expression, primarily expressed in liver, pancreas, kidney and lung. Overexpressed in PHA-stimulated T-cells.

Its subcellular location is the cytoplasm. The catalysed reaction is O-phospho-L-seryl-tRNA(Sec) + selenophosphate + H2O = L-selenocysteinyl-tRNA(Sec) + 2 phosphate. Its pathway is aminoacyl-tRNA biosynthesis; selenocysteinyl-tRNA(Sec) biosynthesis; selenocysteinyl-tRNA(Sec) from L-seryl-tRNA(Sec) (archaeal/eukaryal route): step 2/2. Its function is as follows. Converts O-phosphoseryl-tRNA(Sec) to selenocysteinyl-tRNA(Sec) required for selenoprotein biosynthesis. This chain is O-phosphoseryl-tRNA(Sec) selenium transferase (SEPSECS), found in Homo sapiens (Human).